A 254-amino-acid chain; its full sequence is Imidazole glycerol phosphate synthase subunit HisF (254 aa).

Residues Asp13 and Asp132 contribute to the active site.

This sequence belongs to the HisA/HisF family. In terms of assembly, heterodimer of HisH and HisF.

It localises to the cytoplasm. It carries out the reaction 5-[(5-phospho-1-deoxy-D-ribulos-1-ylimino)methylamino]-1-(5-phospho-beta-D-ribosyl)imidazole-4-carboxamide + L-glutamine = D-erythro-1-(imidazol-4-yl)glycerol 3-phosphate + 5-amino-1-(5-phospho-beta-D-ribosyl)imidazole-4-carboxamide + L-glutamate + H(+). It participates in amino-acid biosynthesis; L-histidine biosynthesis; L-histidine from 5-phospho-alpha-D-ribose 1-diphosphate: step 5/9. Its function is as follows. IGPS catalyzes the conversion of PRFAR and glutamine to IGP, AICAR and glutamate. The HisF subunit catalyzes the cyclization activity that produces IGP and AICAR from PRFAR using the ammonia provided by the HisH subunit. The sequence is that of Imidazole glycerol phosphate synthase subunit HisF from Wolinella succinogenes (strain ATCC 29543 / DSM 1740 / CCUG 13145 / JCM 31913 / LMG 7466 / NCTC 11488 / FDC 602W) (Vibrio succinogenes).